The chain runs to 262 residues: Putative ankyrin repeat protein FPV243 (262 aa).

The ANK repeat unit spans residues 25-54; sequence YGSTPLFEAICNCSCKNVKLFLENNADINE.

The polypeptide is Putative ankyrin repeat protein FPV243 (Vertebrata (FPV)).